Reading from the N-terminus, the 175-residue chain is Nucleoplasmin-3 (175 aa).

Ala-2 carries the post-translational modification N-acetylalanine. Ser-16 carries the post-translational modification Phosphoserine. Arg-27 carries the post-translational modification Omega-N-methylarginine. Phosphoserine occurs at positions 147 and 151.

This sequence belongs to the nucleoplasmin family. Interacts with NPM (via N-terminus). Forms a pentamer with NPM at a ratio 4:1 (NPM3/NPM). Two pentamers form a decamer. Phosphorylated. As to expression, predominantly expressed in testis.

The protein resides in the nucleus. Its subcellular location is the nucleolus. In terms of biological role, plays a role in the regulation of diverse cellular processes such as ribosome biogenesis, chromatin remodeling or protein chaperoning. Modulates the histone chaperone function and the RNA-binding activity of nucleolar phosphoprotein B23/NPM. Efficiently mediates chromatin remodeling when included in a pentamer containing NPM3 and NPM. In Mus musculus (Mouse), this protein is Nucleoplasmin-3 (Npm3).